A 412-amino-acid polypeptide reads, in one-letter code: Alanyl-tRNA editing protein Aarsd1 (412 aa).

2 residues coordinate Zn(2+): histidine 109 and histidine 113. Serine 174 carries the phosphoserine modification. Zn(2+)-binding residues include cysteine 209 and histidine 213.

It belongs to the class-II aminoacyl-tRNA synthetase family. Alax-L subfamily. It depends on Zn(2+) as a cofactor.

The protein localises to the cytoplasm. Functions in trans to edit the amino acid moiety from incorrectly charged tRNA(Ala). The polypeptide is Alanyl-tRNA editing protein Aarsd1 (Aarsd1) (Rattus norvegicus (Rat)).